The primary structure comprises 216 residues: Protein Syd (216 aa).

This sequence belongs to the Syd family.

The protein resides in the cell inner membrane. In terms of biological role, interacts with the SecY protein in vivo. May bind preferentially to an uncomplexed state of SecY, thus functioning either as a chelating agent for excess SecY in the cell or as a regulatory factor that negatively controls the translocase function. This chain is Protein Syd, found in Shewanella sp. (strain MR-7).